The following is a 294-amino-acid chain: Elongation factor Ts (294 aa).

The interval 82-85 is involved in Mg(2+) ion dislocation from EF-Tu; it reads TDFV.

Belongs to the EF-Ts family.

It localises to the cytoplasm. Functionally, associates with the EF-Tu.GDP complex and induces the exchange of GDP to GTP. It remains bound to the aminoacyl-tRNA.EF-Tu.GTP complex up to the GTP hydrolysis stage on the ribosome. The polypeptide is Elongation factor Ts (Nitrosomonas eutropha (strain DSM 101675 / C91 / Nm57)).